The following is a 112-amino-acid chain: Small ribosomal subunit protein eS24 (112 aa).

The interval 88–112 is disordered; it reads RGMAGEEEGNADAQDAPSGDAAEAS.

This sequence belongs to the eukaryotic ribosomal protein eS24 family.

The protein is Small ribosomal subunit protein eS24 of Methanospirillum hungatei JF-1 (strain ATCC 27890 / DSM 864 / NBRC 100397 / JF-1).